Consider the following 630-residue polypeptide: CREB-regulated transcription coactivator 1 (630 aa).

Phosphoserine is present on residues Ser64 and Ser113. Disordered stretches follow at residues 142-174 (ADTS…GPQD), 187-221 (GMEE…VPGI), 256-331 (SPLP…LSPL), and 356-475 (QAGS…HTST). At Thr149 the chain carries Phosphothreonine. Ser151 bears the Phosphoserine; by SIK1 and SIK2 mark. A compositionally biased stretch (polar residues) spans 151-167 (SDSALHQSTMTPTQAES). Residue Thr161 is modified to Phosphothreonine. Basic and acidic residues predominate over residues 194-208 (ETDKTLSKQSWDSKK). Positions 242–258 (TGGSLPDLSTIHFPSPL) match the Nuclear export signal motif. Residues 256–270 (SPLPTPLDPEEPPFP) show a composition bias toward pro residues. Polar residues-rich tracts occupy residues 292–301 (GMNTPSSSPQ) and 310–331 (LSLS…LSPL). The span at 361 to 384 (QPPPQPQPPPPPPPVSQQQPPPPQ) shows a compositional bias: pro residues. Residues 385-394 (VSVGLPQGGP) show a composition bias toward low complexity. Polar residues-rich tracts occupy residues 414–426 (VPST…TESP) and 450–475 (PATQ…HTST).

The protein belongs to the TORC family. In terms of assembly, binds, as a tetramer, through its N-terminal region, with the bZIP domain of CREB1. 'Arg-314' in the bZIP domain of CREB1 is essential for this interaction. Interaction, via its C-terminal, with TAF4, enhances recruitment of TAF4 to CREB1. Interacts with 14-3-3 proteins, including YWHAE/14-3-3 epsilon. Interacts with calmodulin-dependent catalytic subunit PPP3CA/calcineurin A. Phosphorylation/dephosphorylation states of Ser-151 are required for regulating transduction of CREB activity. TORCs are inactive when phosphorylated, and active when dephosphorylated at this site. This primary site of phosphorylation is mediated by SIKs (SIK1 and SIK2), is regulated by cAMP and calcium levels and is dependent on the phosphorylation of SIKs by LKB1. Highly expressed in developing cortical neurons, peaking during dendrite development.

It localises to the cytoplasm. The protein resides in the nucleus. Its function is as follows. Transcriptional coactivator for CREB1 which activates transcription through both consensus and variant cAMP response element (CRE) sites. Acts as a coactivator, in the SIK/TORC signaling pathway, being active when dephosphorylated and acts independently of CREB1 'Ser-133' phosphorylation. Enhances the interaction of CREB1 with TAF4. Regulates the expression of specific CREB-activated genes such as the steroidogenic gene, StAR. Potent coactivator of PGC1alpha and inducer of mitochondrial biogenesis in muscle cells. In the hippocampus, involved in late-phase long-term potentiation (L-LTP) maintenance at the Schaffer collateral-CA1 synapses. May be required for dendritic growth of developing cortical neurons. In concert with SIK1, regulates the light-induced entrainment of the circadian clock. In response to light stimulus, coactivates the CREB-mediated transcription of PER1 which plays an important role in the photic entrainment of the circadian clock. This is CREB-regulated transcription coactivator 1 (Crtc1) from Rattus norvegicus (Rat).